Here is a 103-residue protein sequence, read N- to C-terminus: Large ribosomal subunit protein bL21 (103 aa).

Belongs to the bacterial ribosomal protein bL21 family. Part of the 50S ribosomal subunit. Contacts protein L20.

Its function is as follows. This protein binds to 23S rRNA in the presence of protein L20. This is Large ribosomal subunit protein bL21 from Wolinella succinogenes (strain ATCC 29543 / DSM 1740 / CCUG 13145 / JCM 31913 / LMG 7466 / NCTC 11488 / FDC 602W) (Vibrio succinogenes).